We begin with the raw amino-acid sequence, 166 residues long: Transcriptional repressor NrdR (166 aa).

A zinc finger spans residues cysteine 3–cysteine 34. The 91-residue stretch at leucine 49–lysine 139 folds into the ATP-cone domain.

It belongs to the NrdR family. Zn(2+) is required as a cofactor.

Negatively regulates transcription of bacterial ribonucleotide reductase nrd genes and operons by binding to NrdR-boxes. This Chloroflexus aurantiacus (strain ATCC 29364 / DSM 637 / Y-400-fl) protein is Transcriptional repressor NrdR.